The following is a 137-amino-acid chain: Large ribosomal subunit protein uL16c (137 aa).

This sequence belongs to the universal ribosomal protein uL16 family. Part of the 50S ribosomal subunit.

It is found in the plastid. The protein resides in the chloroplast. The sequence is that of Large ribosomal subunit protein uL16c from Trieres chinensis (Marine centric diatom).